The chain runs to 1874 residues: MHRNARGNVPGPSSLRQSIGTTKADRDRDRVPSVDAGAPRTPDTTTSSSTTRHMHHQPHPRNGRQERKCTVTVNESFSRDEVLLNLDLFDNGIKPGSLMAIEVPPEKSGHASLRKMPTQDHLDRDDSSMDASQTGSTTTTDRRYLFIVKDMSKDMKLRHPKVELYVAKHVAEAFGMKKGGHVYLIPEDANNPSIEASHVELSFRDQYLSRADMWRMAVGELSERTVYQGQVIYFLGTCKAQISAVFVDGRKVRSAFFGRHTRPIYRSESARYILFIQMSREMWDFDSDGSGEIMFNKVVNGFLPALFKKWMALKLKHLVSIVLFARVEYDTGISTEFAETALHDSYFTGTQKSGSKRPYKDFYRVVVSEKTSVEWTSILYHLKREFGIFRRDISLHHQQALNPMQSVSEEGATKQPYHRQIRAESSLATHGNFLEAINLASTVYAHDYIDRDLMRTGISVVVISPGAGVFEVDYEELRRTTEALVGNGIGIDLICVPKIPLHSVPLFRYKKVPEKGRRHSEKIKTHFHDGSTPKYHTPAIGSYTSALGSSLSPTKNMSVPPRVESSLMSHASNDEWSYALPQWLHVSYWTGNSDEALSYQGIALSASDNTCQDSQDEFAIRCRMYDLQMRSVLETNEIETTPLHADPSFPRKLIQPLPLAKFRRFDVDGITLIPNLRHTGGLVDHVSGFQKFAPDKHAKPGEKTIWRHLQEYDDTKAHLPASRRHLGFRPQNNADNVRMHGVESGSYLGASMISERRVSINHHQSPHPSVSSKTSSGKTPKFMRQISLGQRGFGIAAPKVAVAEVQVENVAAATSMAAVSGSRSPLPVRMTPIKSNPQTSQSPQALTAIRDSPIAERAQESGRSSRLAPSRPIHIRNNVQSSDSTLFGTVGTMISSSVIRHAGAAPDAPEIKYSNALRAEDAQKVGISKLRAGEMPDQQAILSPSAAVSPWLTVLNPCNPEANKVDETNLYSRWQHVFPQPSEMKVMKWKSLCTPAAVPLTTEHFPTQAQFDSEYQRQPYNVSQEFDDELTEEPKTREELLKELISLRFSQGFQVVVGQAVAKAFGQKQMKIADILSRDHSAEDGTSIFLSVGNTIHQLSCVNGTEVEVNIFTRKPALQASNLEQPEVYKPAIRTIMDEDYVARQIDIATPKPERNWNYIDSYVAGHDLELSESFRFWRARFVLIPIVNRTSLDPAAGEKEEETRIEGTRRLGKLWQKHRYIPPSDRRFQDLGPRHRKDPNPLDIVYKTDDPSVVIAAELETLPLLEGLEAGHRRAQLVTNKHQFRKSSLNLAQLAEAIQQPVENGGVRMQNRRWHLRLHYNCFIGSDMIDWMLDNFEDLDSREEAEALGNVLMISDEDKLKDKEKDKDKEKDKDKEKEGSTRRESGIFVHVEKRHRFKDGQYFYQISSDFAKPQPSTWFNQRWREASVPSTPISEQPPRESIRNSISHTLSEEESLTSGATTPTAPILPYGGNKPRVMLSKVMKYDVDHRKRSYRPERIDLHYDRLHNPDNCYHLRIDWMNVTAKLIEDAVEGWAREASLYGMRLVEVPIAEACTISDVNPFRKPFPIKLAVPPPDRQPVTFYDPTSFSPLAQPARLFYQKAILRKFDFVLDMESASSFPSNVDVTYSWGKPEFKYTQYIHRSGILLAEITDEGDFLILANRLYSNRAQAARDKEMRKEEEQQQHKHRQGGAGAGGNGGLPGHSHVADLTPLSSPLFRAVNTTGSPKTAGQGAAGAGSHGNNIAPGGEHNVHSALIKFSLDEPNSIRLEMEKFCHDPVALEAFYSELLDRAPGPQPASSIMAPTIISQTGSGTGPVADHNIPSFPSGGLPQGLLSSSVAGDGLSVIPSPVQQRVQSPAVLAASQLLRRGSVQY.

4 disordered regions span residues 1–68, 106–136, 1363–1386, and 1671–1749; these read MHRN…QERK, EKSGHASLRKMPTQDHLDRDDSSMDASQTGS, DKEKDKDKEKDKDKEKEGSTRRES, and AARD…PGGE. The segment covering 23 to 32 has biased composition (basic and acidic residues); the sequence is KADRDRDRVP. The segment covering 52–62 has biased composition (basic residues); the sequence is RHMHHQPHPRN. Positions 117-127 are enriched in basic and acidic residues; it reads PTQDHLDRDDS. One can recognise a DEP domain in the interval 1304–1383; sequence ENGGVRMQNR…KDKEKEGSTR (80 aa). A compositionally biased stretch (basic and acidic residues) spans 1671 to 1685; the sequence is AARDKEMRKEEEQQQ. Over residues 1691–1702 the composition is skewed to gly residues; it reads GGAGAGGNGGLP.

Belongs to the IML1 family.

It is found in the vacuole membrane. The protein is Vacuolar membrane-associated protein IML1 (IML1) of Pyricularia oryzae (strain 70-15 / ATCC MYA-4617 / FGSC 8958) (Rice blast fungus).